The primary structure comprises 237 residues: ATP-dependent dethiobiotin synthetase BioD (237 aa).

An ATP-binding site is contributed by 21–26 (GVGKTV). Residue threonine 25 participates in Mg(2+) binding. Residue lysine 48 is part of the active site. Threonine 52 is a binding site for substrate. ATP contacts are provided by residues aspartate 56, 117–120 (EALG), 177–178 (SC), and 209–211 (PYL). Residues aspartate 56 and glutamate 117 each contribute to the Mg(2+) site.

This sequence belongs to the dethiobiotin synthetase family. In terms of assembly, homodimer. It depends on Mg(2+) as a cofactor.

Its subcellular location is the cytoplasm. It carries out the reaction (7R,8S)-7,8-diammoniononanoate + CO2 + ATP = (4R,5S)-dethiobiotin + ADP + phosphate + 3 H(+). The enzyme catalyses (7R,8S)-8-amino-7-(carboxyamino)nonanoate + ATP = (4R,5S)-dethiobiotin + ADP + phosphate + H(+). It functions in the pathway cofactor biosynthesis; biotin biosynthesis; biotin from 7,8-diaminononanoate: step 1/2. In terms of biological role, catalyzes a mechanistically unusual reaction, the ATP-dependent insertion of CO2 between the N7 and N8 nitrogen atoms of 7,8-diaminopelargonic acid (DAPA, also called 7,8-diammoniononanoate) to form a ureido ring. This cyanobacterium does not encode bioA (which catalyzes the formation of the precursor for this reaction in the cannonical pathway), instead it encodes bioU, which replaces bioA and also performs the first half of the cannonical BioD reaction. Thus in this bacteria BioD has a different substrate. In Synechocystis replacement of bioU by bioA from E.coli leads to biotin synthesis, showing BioD can use the 'cannonical' 7,8-diammoniononanoate as a substrate. This Synechocystis sp. (strain ATCC 27184 / PCC 6803 / Kazusa) protein is ATP-dependent dethiobiotin synthetase BioD.